The sequence spans 173 residues: Crossover junction endodeoxyribonuclease RuvC (173 aa).

Catalysis depends on residues aspartate 8, glutamate 67, and aspartate 139. Mg(2+)-binding residues include aspartate 8, glutamate 67, and aspartate 139.

This sequence belongs to the RuvC family. Homodimer which binds Holliday junction (HJ) DNA. The HJ becomes 2-fold symmetrical on binding to RuvC with unstacked arms; it has a different conformation from HJ DNA in complex with RuvA. In the full resolvosome a probable DNA-RuvA(4)-RuvB(12)-RuvC(2) complex forms which resolves the HJ. It depends on Mg(2+) as a cofactor.

Its subcellular location is the cytoplasm. It carries out the reaction Endonucleolytic cleavage at a junction such as a reciprocal single-stranded crossover between two homologous DNA duplexes (Holliday junction).. Functionally, the RuvA-RuvB-RuvC complex processes Holliday junction (HJ) DNA during genetic recombination and DNA repair. Endonuclease that resolves HJ intermediates. Cleaves cruciform DNA by making single-stranded nicks across the HJ at symmetrical positions within the homologous arms, yielding a 5'-phosphate and a 3'-hydroxyl group; requires a central core of homology in the junction. The consensus cleavage sequence is 5'-(A/T)TT(C/G)-3'. Cleavage occurs on the 3'-side of the TT dinucleotide at the point of strand exchange. HJ branch migration catalyzed by RuvA-RuvB allows RuvC to scan DNA until it finds its consensus sequence, where it cleaves and resolves the cruciform DNA. This Shewanella oneidensis (strain ATCC 700550 / JCM 31522 / CIP 106686 / LMG 19005 / NCIMB 14063 / MR-1) protein is Crossover junction endodeoxyribonuclease RuvC.